The primary structure comprises 363 residues: 3-isopropylmalate dehydrogenase (363 aa).

Position 79–92 (79–92 (GPKWEHLPPNEQPE)) interacts with NAD(+). 4 residues coordinate substrate: Arg100, Arg110, Arg139, and Asp228. 3 residues coordinate Mg(2+): Asp228, Asp252, and Asp256. 286 to 298 (GSAPDIAGKNIAN) serves as a coordination point for NAD(+).

Belongs to the isocitrate and isopropylmalate dehydrogenases family. LeuB type 1 subfamily. As to quaternary structure, homodimer. It depends on Mg(2+) as a cofactor. Requires Mn(2+) as cofactor.

The protein localises to the cytoplasm. It carries out the reaction (2R,3S)-3-isopropylmalate + NAD(+) = 4-methyl-2-oxopentanoate + CO2 + NADH. It participates in amino-acid biosynthesis; L-leucine biosynthesis; L-leucine from 3-methyl-2-oxobutanoate: step 3/4. In terms of biological role, catalyzes the oxidation of 3-carboxy-2-hydroxy-4-methylpentanoate (3-isopropylmalate) to 3-carboxy-4-methyl-2-oxopentanoate. The product decarboxylates to 4-methyl-2 oxopentanoate. The chain is 3-isopropylmalate dehydrogenase from Vibrio cholerae serotype O1 (strain ATCC 39315 / El Tor Inaba N16961).